Reading from the N-terminus, the 222-residue chain is Probable transcriptional regulator ycf29 (222 aa).

One can recognise a Response regulatory domain in the interval 4-120 (KLMLVENDIV…ELLSIINNLI (117 aa)). D53 is modified (4-aspartylphosphate). The 66-residue stretch at 139 to 204 (QLNHKIRLTP…LLVKYSINNN (66 aa)) folds into the HTH luxR-type domain. A DNA-binding region (H-T-H motif) is located at residues 163–182 (NKEISTILNTSVRNVEKYVS).

The protein localises to the plastid. It localises to the chloroplast. The sequence is that of Probable transcriptional regulator ycf29 (ycf29) from Pyropia yezoensis (Susabi-nori).